We begin with the raw amino-acid sequence, 402 residues long: Propionate kinase (402 aa).

ATP is bound by residues Asn11 and Lys18. Residue Asn11 participates in Mg(2+) binding. Arg86 is a substrate binding site. Residue Asp143 is the Proton donor/acceptor of the active site. Residues His175, 203 to 207, 278 to 280, and 326 to 330 each bind ATP; these read HLGNG, DLR, and GIGEN.

Belongs to the acetokinase family. TdcD subfamily. Homodimer. It depends on Mg(2+) as a cofactor.

The catalysed reaction is propanoate + ATP = propanoyl phosphate + ADP. It functions in the pathway amino-acid degradation; L-threonine degradation via propanoate pathway; propanoate from L-threonine: step 4/4. Functionally, catalyzes the conversion of propionyl phosphate and ADP to propionate and ATP. This Escherichia coli O157:H7 protein is Propionate kinase.